We begin with the raw amino-acid sequence, 120 residues long: Large ribosomal subunit protein uL18 (120 aa).

The protein belongs to the universal ribosomal protein uL18 family. Part of the 50S ribosomal subunit; part of the 5S rRNA/L5/L18/L25 subcomplex. Contacts the 5S and 23S rRNAs.

In terms of biological role, this is one of the proteins that bind and probably mediate the attachment of the 5S RNA into the large ribosomal subunit, where it forms part of the central protuberance. This is Large ribosomal subunit protein uL18 from Brucella anthropi (strain ATCC 49188 / DSM 6882 / CCUG 24695 / JCM 21032 / LMG 3331 / NBRC 15819 / NCTC 12168 / Alc 37) (Ochrobactrum anthropi).